We begin with the raw amino-acid sequence, 178 residues long: Probable inosine/xanthosine triphosphatase (178 aa).

Belongs to the YjjX NTPase family. Homodimer. It depends on Mg(2+) as a cofactor. Mn(2+) serves as cofactor.

It carries out the reaction XTP + H2O = XDP + phosphate + H(+). The enzyme catalyses ITP + H2O = IDP + phosphate + H(+). In terms of biological role, phosphatase that hydrolyzes non-canonical purine nucleotides such as XTP and ITP to their respective diphosphate derivatives. Probably excludes non-canonical purines from DNA/RNA precursor pool, thus preventing their incorporation into DNA/RNA and avoiding chromosomal lesions. The chain is Probable inosine/xanthosine triphosphatase from Pyrobaculum calidifontis (strain DSM 21063 / JCM 11548 / VA1).